The following is a 393-amino-acid chain: E3 ubiquitin-protein transferase RMND5B (393 aa).

N-acetylmethionine is present on Met1. The region spanning 116–148 (QQQILQMAIVEHLYQQGMLSVAEELCQESTLNV) is the LisH domain. The CTLH domain maps to 155 to 212 (PFLELNRILEALHEQDLGPALEWAVSHRQRLLELNSSLEFKLHRLHFIRLLAGGPEKQ). An RING-Gid-type zinc finger spans residues 338–379 (CPILRQQTSDSNPPIKLICGHVISRDALNKLINGGKLKCPYC).

In terms of assembly, identified in the CTLH complex that contains GID4, RANBP9 and/or RANBP10, MKLN1, MAEA, RMND5A (or alternatively its paralog RMND5B), GID8, ARMC8, WDR26 and YPEL5. Within this complex, MAEA, RMND5A (or alternatively its paralog RMND5B), GID8, WDR26, and RANBP9 and/or RANBP10 form the catalytic core, while GID4, MKLN1, ARMC8 and YPEL5 have ancillary roles.

The protein localises to the cytoplasm. It localises to the cytosol. It catalyses the reaction S-ubiquitinyl-[E2 ubiquitin-conjugating enzyme]-L-cysteine + [acceptor protein]-L-lysine = [E2 ubiquitin-conjugating enzyme]-L-cysteine + N(6)-ubiquitinyl-[acceptor protein]-L-lysine.. Its function is as follows. Core component of the CTLH E3 ubiquitin-protein ligase complex that selectively accepts ubiquitin from UBE2H and mediates ubiquitination and subsequent proteasomal degradation of the transcription factor HBP1. MAEA and RMND5A are both required for catalytic activity of the CTLH E3 ubiquitin-protein ligase complex. Catalytic activity of the complex is required for normal cell proliferation. The CTLH E3 ubiquitin-protein ligase complex is not required for the degradation of enzymes involved in gluconeogenesis, such as FBP1. The protein is E3 ubiquitin-protein transferase RMND5B (Rmnd5b) of Mus musculus (Mouse).